A 216-amino-acid polypeptide reads, in one-letter code: GTP:AMP phosphotransferase, mitochondrial (216 aa).

Position 15–20 (15–20 (GSGKGT)) interacts with GTP. Positions 35–64 (STGDILRQNIIKNTELGKKAKQYIAEGKLV) are NMPbind. AMP-binding positions include T36, R41, 62-64 (KLV), 89-92 (GFPR), and Q96. Residues 125–162 (NRWIHAPSGRVYNIGFKNPKVPGKDDVTGEPLMQREDD) are LID. GTP-binding positions include R126 and 135-136 (VY). Positions 159 and 170 each coordinate AMP. T199 contacts GTP.

The protein belongs to the adenylate kinase family. AK3 subfamily. Monomer. Ubiquitously expressed with highest levels expressed in the abdomen, suggesting a function in muscle tissues.

It localises to the mitochondrion matrix. The catalysed reaction is a ribonucleoside 5'-triphosphate + AMP = a ribonucleoside 5'-diphosphate + ADP. Functionally, involved in maintaining the homeostasis of cellular nucleotides by catalyzing the interconversion of nucleoside phosphates. Has GTP:AMP phosphotransferase and ITP:AMP phosphotransferase activities. The chain is GTP:AMP phosphotransferase, mitochondrial from Drosophila melanogaster (Fruit fly).